Here is a 207-residue protein sequence, read N- to C-terminus: Large ribosomal subunit protein uL4 (207 aa).

The segment at lysine 50 to glutamine 75 is disordered.

This sequence belongs to the universal ribosomal protein uL4 family. As to quaternary structure, part of the 50S ribosomal subunit.

Its function is as follows. One of the primary rRNA binding proteins, this protein initially binds near the 5'-end of the 23S rRNA. It is important during the early stages of 50S assembly. It makes multiple contacts with different domains of the 23S rRNA in the assembled 50S subunit and ribosome. Forms part of the polypeptide exit tunnel. The chain is Large ribosomal subunit protein uL4 from Pelobacter propionicus (strain DSM 2379 / NBRC 103807 / OttBd1).